Consider the following 475-residue polypeptide: C3a anaphylatoxin chemotactic receptor (475 aa).

At 1-23 (MESSSAETNSTGLHLEPQYQPET) the chain is on the extracellular side. A glycan (N-linked (GlcNAc...) asparagine) is linked at asparagine 9. A helical membrane pass occupies residues 24–46 (ILAMAILGLTFVLGLPGNGLVLW). Residues 47-57 (VAGLKMRRTVN) are Cytoplasmic-facing. A helical membrane pass occupies residues 58 to 80 (TVWFLHLTVADFVCCLSLPFSMA). Topologically, residues 81 to 96 (HLALRGYWPYGEILCK) are extracellular. Cysteine 95 and cysteine 172 form a disulfide bridge. The helical transmembrane segment at 97-118 (FIPTVIIFNMFASVFLLTAISL) threads the bilayer. Residues 119–139 (DRCLMVLKPIWCQNHRNVRTA) are Cytoplasmic-facing. A helical transmembrane segment spans residues 140 to 160 (CIICGCIWLVAFVLCIPVFVY). The Extracellular segment spans residues 161–331 (RETFTLENHT…RLLKVITFTR (171 aa)). Asparagine 168 carries an N-linked (GlcNAc...) asparagine glycan. Tyrosine 174 and tyrosine 183 each carry sulfotyrosine. Residues asparagine 273 and asparagine 292 are each glycosylated (N-linked (GlcNAc...) asparagine). A helical membrane pass occupies residues 332 to 351 (LVVGFLLPMIIMVACYTLII). Residues 352–368 (FRMRRVRVVKSWNKALH) lie on the Cytoplasmic side of the membrane. A helical membrane pass occupies residues 369-391 (LAMVVVTIFLICWAPYHVFGVLI). The Extracellular segment spans residues 392–408 (LFINPESRVGAALLSWD). The chain crosses the membrane as a helical span at residues 409-429 (HVSIALASANSCFNPFLYALL). Topologically, residues 430-475 (GRDLRKRVRQSMKGILEAAFSEDISKSTSFIQAKAFSEKHSLSTNV) are cytoplasmic. A Phosphoserine modification is found at serine 450.

Belongs to the G-protein coupled receptor 1 family. As to quaternary structure, interacts with VGF-derived peptide TLQP-21. As to expression, expressed in the heart, kidney, lung, liver, peritoneal macrophages and spleen.

It is found in the cell membrane. Receptor for the chemotactic and inflammatory peptide anaphylatoxin C3a. This receptor stimulates chemotaxis, granule enzyme release and superoxide anion production. The polypeptide is C3a anaphylatoxin chemotactic receptor (C3AR1) (Cavia porcellus (Guinea pig)).